The following is a 260-amino-acid chain: Archaerhodopsin-1 (260 aa).

The propeptide occupies 1-6; it reads MDPIAL. At 7 to 20 the chain is on the extracellular side; the sequence is TAAVGADLLGDGRP. Residues 21-42 traverse the membrane as a helical segment; the sequence is ETLWLGIGTLLMLIGTFYFIVK. Topologically, residues 43–51 are cytoplasmic; sequence GWGVTDKEA. Residues 52-73 traverse the membrane as a helical segment; it reads REYYSITILVPGIASAAYLSMF. Topologically, residues 74 to 91 are extracellular; the sequence is FGIGLTEVQVGSEMLDIY. The helical transmembrane segment at 92-113 threads the bilayer; sequence YARYADWLFTTPLLLLDLALLA. Over 114-116 the chain is Cytoplasmic; sequence KVD. Residues 117–139 form a helical membrane-spanning segment; it reads RVSIGTLVGVDALMIVTGLVGAL. Over 140-143 the chain is Extracellular; the sequence is SHTP. The helical transmembrane segment at 144-172 threads the bilayer; sequence LARYTWWLFSTICMIVVLYFLATSLRAAA. Topologically, residues 173-176 are cytoplasmic; that stretch reads KERG. The helical transmembrane segment at 177 to 204 threads the bilayer; the sequence is PEVASTFNTLTALVLVLWTAYPILWIIG. Topologically, residues 205–212 are extracellular; it reads TEGAGVVG. The chain crosses the membrane as a helical span at residues 213-245; it reads LGIETLLFMVLDVTAKVGFGFILLRSRAILGDT. The residue at position 228 (Lys228) is an N6-(retinylidene)lysine. Residues 246–260 are Cytoplasmic-facing; it reads EAPEPSAGAEASAAD.

Belongs to the archaeal/bacterial/fungal opsin family.

Its subcellular location is the cell membrane. In terms of biological role, light-driven proton pump. It may interact with bacterioruberin in the claret membrane. The chain is Archaerhodopsin-1 from Halorubrum ezzemoulense (Halorubrum chaoviator).